We begin with the raw amino-acid sequence, 201 residues long: Small ribosomal subunit protein uS4 (201 aa).

The interval 1–46 is disordered; that stretch reads MARYTGPRSRISRRFGEPVMGDSKALQKKNYAPGMHGRNKKRKQSE. Residues 92-151 enclose the S4 RNA-binding domain; the sequence is ARLDNTVYRLGIASSRRAARQLVIHKHIVVNGDVVNIPSYQLKPGDQLGVREKSKSIEAI.

The protein belongs to the universal ribosomal protein uS4 family. Part of the 30S ribosomal subunit. Contacts protein S5. The interaction surface between S4 and S5 is involved in control of translational fidelity.

One of the primary rRNA binding proteins, it binds directly to 16S rRNA where it nucleates assembly of the body of the 30S subunit. Functionally, with S5 and S12 plays an important role in translational accuracy. In Cytophaga hutchinsonii (strain ATCC 33406 / DSM 1761 / CIP 103989 / NBRC 15051 / NCIMB 9469 / D465), this protein is Small ribosomal subunit protein uS4.